The sequence spans 205 residues: Small ribosomal subunit protein uS4 (205 aa).

Basic and acidic residues predominate over residues 1–16 (MSKRESSKYKIDRRMG). The interval 1-46 (MSKRESSKYKIDRRMGENIWGRPKSPVNRREYGPGQHGQRRKGKLS) is disordered. One can recognise an S4 RNA-binding domain in the interval 94–157 (SRLDAIVYRA…KQLVTVLEAV (64 aa)).

The protein belongs to the universal ribosomal protein uS4 family. In terms of assembly, part of the 30S ribosomal subunit. Contacts protein S5. The interaction surface between S4 and S5 is involved in control of translational fidelity.

Functionally, one of the primary rRNA binding proteins, it binds directly to 16S rRNA where it nucleates assembly of the body of the 30S subunit. In terms of biological role, with S5 and S12 plays an important role in translational accuracy. This Rhizobium etli (strain CIAT 652) protein is Small ribosomal subunit protein uS4.